Consider the following 140-residue polypeptide: Large ribosomal subunit protein uL22 (140 aa).

The protein belongs to the universal ribosomal protein uL22 family. In terms of assembly, part of the 50S ribosomal subunit.

This protein binds specifically to 23S rRNA; its binding is stimulated by other ribosomal proteins, e.g. L4, L17, and L20. It is important during the early stages of 50S assembly. It makes multiple contacts with different domains of the 23S rRNA in the assembled 50S subunit and ribosome. Its function is as follows. The globular domain of the protein is located near the polypeptide exit tunnel on the outside of the subunit, while an extended beta-hairpin is found that lines the wall of the exit tunnel in the center of the 70S ribosome. The protein is Large ribosomal subunit protein uL22 of Parafrankia sp. (strain EAN1pec).